A 581-amino-acid chain; its full sequence is Leucine-rich repeat-containing protein 47 (581 aa).

7 LRR repeats span residues 78-97, 102-123, 132-154, 156-177, 182-204, 205-227, and 228-248; these read QLHSLVLRRNALGPGLSPEL, ALRVLDLSGNALETLPPGEGLG, QLQSLNLSGNRLRELPADLARCA, RLQSLNLTGNRLDAFPPELFRP, LLSELAAADNCLRELSPDIAHLA, SLKTLDLSNNQLTEIPAELADCP, and KLKEINFRGNRLRDKRLEKMV. Residues 262–301 are disordered; it reads AGGRGGRSKGRQEASEKEDRKKRRERKQHRESGEGEEEVA. A compositionally biased stretch (basic and acidic residues) spans 271-280; sequence GRQEASEKED. S314, S430, and S519 each carry phosphoserine. Residues 401–436 adopt a coiled-coil conformation; it reads LGRKEAKAKELVRQLQLEAEEQRKQKKRQSVSGLHR.

This chain is Leucine-rich repeat-containing protein 47 (Lrrc47), found in Mus musculus (Mouse).